The following is an 845-amino-acid chain: G-type lectin S-receptor-like serine/threonine-protein kinase At1g11410 (845 aa).

The N-terminal stretch at 1 to 21 (MKFFFIFFIFLFSFLIQSCYS) is a signal peptide. The region spanning 22 to 147 (DNTILRSQSL…VTGKSFWESF (126 aa)) is the Bulb-type lectin domain. Over 22 to 441 (DNTILRSQSL…NGNGASGKKR (420 aa)) the chain is Extracellular. 5 N-linked (GlcNAc...) asparagine glycosylation sites follow: Asn-82, Asn-103, Asn-185, Asn-231, and Asn-259. In terms of domain architecture, EGF-like spans 283–321 (PEDKCDIYNHCGFNGYCDSTSTEKFECSCLPGYEPKTPR). Cystine bridges form between Cys-287–Cys-299 and Cys-293–Cys-309. Residues 341–424 (CNGKEGFAKL…SGQDFYLRVD (84 aa)) enclose the PAN domain. 3 N-linked (GlcNAc...) asparagine glycosylation sites follow: Asn-357, Asn-366, and Asn-379. 2 cysteine pairs are disulfide-bonded: Cys-372-Cys-399 and Cys-376-Cys-382. The helical transmembrane segment at 442 to 462 (LVLILISLIAVVMLLLISFHC) threads the bilayer. The Cytoplasmic portion of the chain corresponds to 463 to 845 (YLRKRRQRTQ…DVTLTDVQGR (383 aa)). In terms of domain architecture, Protein kinase spans 523–808 (FAFQNKLGAG…DLPSPKHPAF (286 aa)). ATP contacts are provided by residues 529 to 537 (LGAGGFGPV) and Lys-551. Positions 612–629 (EQRAELDWPKRMGIIRGI) are caM-binding. Catalysis depends on Asp-648, which acts as the Proton acceptor. Residues 803–845 (PKHPAFTAGRRRNTKTGGSSDNWPSGETSSTINDVTLTDVQGR) form a disordered region. The segment covering 817-845 (KTGGSSDNWPSGETSSTINDVTLTDVQGR) has biased composition (polar residues).

It belongs to the protein kinase superfamily. Ser/Thr protein kinase family.

It is found in the cell membrane. The catalysed reaction is L-seryl-[protein] + ATP = O-phospho-L-seryl-[protein] + ADP + H(+). The enzyme catalyses L-threonyl-[protein] + ATP = O-phospho-L-threonyl-[protein] + ADP + H(+). This Arabidopsis thaliana (Mouse-ear cress) protein is G-type lectin S-receptor-like serine/threonine-protein kinase At1g11410.